The following is a 75-amino-acid chain: UPF0270 protein Pfl01_4103 (75 aa).

Belongs to the UPF0270 family.

The protein is UPF0270 protein Pfl01_4103 of Pseudomonas fluorescens (strain Pf0-1).